The chain runs to 501 residues: Ribose import ATP-binding protein RbsA (501 aa).

ABC transporter domains lie at 5-241 and 252-495; these read LQLK…VGRK and APGE…VGKL. An ATP-binding site is contributed by 37-44; sequence GENGAGKS.

Belongs to the ABC transporter superfamily. Ribose importer (TC 3.A.1.2.1) family. In terms of assembly, the complex is composed of an ATP-binding protein (RbsA), two transmembrane proteins (RbsC) and a solute-binding protein (RbsB).

Its subcellular location is the cell inner membrane. It carries out the reaction D-ribose(out) + ATP + H2O = D-ribose(in) + ADP + phosphate + H(+). In terms of biological role, part of the ABC transporter complex RbsABC involved in ribose import. Responsible for energy coupling to the transport system. This chain is Ribose import ATP-binding protein RbsA, found in Salmonella typhimurium (strain LT2 / SGSC1412 / ATCC 700720).